Reading from the N-terminus, the 329-residue chain is Acetyl-coenzyme A carboxylase carboxyl transferase subunit alpha (329 aa).

Positions 40 to 294 (QLETLAARRR…KESLIRNLRE (255 aa)) constitute a CoA carboxyltransferase C-terminal domain.

It belongs to the AccA family. As to quaternary structure, acetyl-CoA carboxylase is a heterohexamer composed of biotin carboxyl carrier protein (AccB), biotin carboxylase (AccC) and two subunits each of ACCase subunit alpha (AccA) and ACCase subunit beta (AccD).

The protein localises to the cytoplasm. It carries out the reaction N(6)-carboxybiotinyl-L-lysyl-[protein] + acetyl-CoA = N(6)-biotinyl-L-lysyl-[protein] + malonyl-CoA. Its pathway is lipid metabolism; malonyl-CoA biosynthesis; malonyl-CoA from acetyl-CoA: step 1/1. Functionally, component of the acetyl coenzyme A carboxylase (ACC) complex. First, biotin carboxylase catalyzes the carboxylation of biotin on its carrier protein (BCCP) and then the CO(2) group is transferred by the carboxyltransferase to acetyl-CoA to form malonyl-CoA. The polypeptide is Acetyl-coenzyme A carboxylase carboxyl transferase subunit alpha (Prochlorococcus marinus (strain MIT 9211)).